Here is a 132-residue protein sequence, read N- to C-terminus: uncharacterized protein (132 aa).

Transmembrane regions (helical) follow at residues 18–38, 50–70, and 71–91; these read MLFIFMPFAITSFFAFLFIGI, IIYFFIFAFGFVLPDLPGVFI, and VVPLWAVTIIHGFKVRPLYLI.

The protein localises to the cell membrane. This is an uncharacterized protein from Bacillus subtilis (strain 168).